Consider the following 660-residue polypeptide: Bifunctional polymyxin resistance protein ArnA (660 aa).

The interval 1–304 (MKTVVFAYHD…TLGLVQGSRL (304 aa)) is formyltransferase ArnAFT. 86–88 (HLI) is a binding site for (6R)-10-formyltetrahydrofolate. The Proton donor; for formyltransferase activity role is filled by H104. (6R)-10-formyltetrahydrofolate is bound by residues R114 and 136-140 (VKRAD). A dehydrogenase ArnADH region spans residues 314-660 (RRTRVLILGV…RTVDLTDKPS (347 aa)). NAD(+) is bound by residues D347 and 368 to 369 (DI). UDP-alpha-D-glucuronate-binding positions include A393, Y398, and 432 to 433 (TS). Residue E434 is the Proton acceptor; for decarboxylase activity of the active site. UDP-alpha-D-glucuronate-binding positions include R460, N492, 526-535 (KLIDGGKQKR), and Y613. R619 acts as the Proton donor; for decarboxylase activity in catalysis.

This sequence in the N-terminal section; belongs to the Fmt family. UDP-L-Ara4N formyltransferase subfamily. It in the C-terminal section; belongs to the NAD(P)-dependent epimerase/dehydratase family. UDP-glucuronic acid decarboxylase subfamily. As to quaternary structure, homohexamer, formed by a dimer of trimers.

It catalyses the reaction UDP-alpha-D-glucuronate + NAD(+) = UDP-beta-L-threo-pentopyranos-4-ulose + CO2 + NADH. The enzyme catalyses UDP-4-amino-4-deoxy-beta-L-arabinose + (6R)-10-formyltetrahydrofolate = UDP-4-deoxy-4-formamido-beta-L-arabinose + (6S)-5,6,7,8-tetrahydrofolate + H(+). The protein operates within nucleotide-sugar biosynthesis; UDP-4-deoxy-4-formamido-beta-L-arabinose biosynthesis; UDP-4-deoxy-4-formamido-beta-L-arabinose from UDP-alpha-D-glucuronate: step 1/3. It functions in the pathway nucleotide-sugar biosynthesis; UDP-4-deoxy-4-formamido-beta-L-arabinose biosynthesis; UDP-4-deoxy-4-formamido-beta-L-arabinose from UDP-alpha-D-glucuronate: step 3/3. Its pathway is bacterial outer membrane biogenesis; lipopolysaccharide biosynthesis. Its function is as follows. Bifunctional enzyme that catalyzes the oxidative decarboxylation of UDP-glucuronic acid (UDP-GlcUA) to UDP-4-keto-arabinose (UDP-Ara4O) and the addition of a formyl group to UDP-4-amino-4-deoxy-L-arabinose (UDP-L-Ara4N) to form UDP-L-4-formamido-arabinose (UDP-L-Ara4FN). The modified arabinose is attached to lipid A and is required for resistance to polymyxin and cationic antimicrobial peptides. The polypeptide is Bifunctional polymyxin resistance protein ArnA (Escherichia coli O17:K52:H18 (strain UMN026 / ExPEC)).